The chain runs to 393 residues: Cytochrome b (393 aa).

Helical transmembrane passes span Phe32–Met52, Trp76–Gly98, Val113–Val133, and Phe179–Ile199. The heme b site is built by His82 and His96. Heme b contacts are provided by His183 and His197. His202 serves as a coordination point for a ubiquinone. 4 consecutive transmembrane segments (helical) span residues Phe226–Phe246, Leu290–Asp310, Leu322–Ala342, and Phe349–Pro369.

Belongs to the cytochrome b family. In terms of assembly, fungal cytochrome b-c1 complex contains 10 subunits; 3 respiratory subunits, 2 core proteins and 5 low-molecular weight proteins. Cytochrome b-c1 complex is a homodimer. It depends on heme b as a cofactor.

Its subcellular location is the mitochondrion inner membrane. Functionally, component of the ubiquinol-cytochrome c reductase complex (complex III or cytochrome b-c1 complex) that is part of the mitochondrial respiratory chain. The b-c1 complex mediates electron transfer from ubiquinol to cytochrome c. Contributes to the generation of a proton gradient across the mitochondrial membrane that is then used for ATP synthesis. The sequence is that of Cytochrome b (COB) from Venturia inaequalis (Apple scab fungus).